The primary structure comprises 258 residues: Allene oxide cyclase 3, chloroplastic (258 aa).

Residues 1–56 (MASSSAAMSLESISMTTLNNLSRNHQSHRSSLLGFSRSFQNLGISSNGPDFSSRSR) constitute a chloroplast transit peptide.

The protein belongs to the allene oxide cyclase family. As to expression, highly expressed in fully developed leaves.

Its subcellular location is the plastid. The protein localises to the chloroplast. The enzyme catalyses (9Z,13S,15Z)-12,13-epoxyoctadeca-9,11,15-trienoate = (9S,13S,15Z)-12-oxophyto-10,15-dienoate. In terms of biological role, involved in the production of 12-oxo-phytodienoic acid (OPDA), a precursor of jasmonic acid. The sequence is that of Allene oxide cyclase 3, chloroplastic (AOC3) from Arabidopsis thaliana (Mouse-ear cress).